Reading from the N-terminus, the 919-residue chain is PAX3- and PAX7-binding protein 1 (919 aa).

A compositionally biased stretch (basic residues) spans 1–11; it reads MFRKARRVNVR. Disordered stretches follow at residues 1–120, 151–206, and 237–277; these read MFRK…ENEE, KTEL…GGAF, and AREL…RIVF. S16 carries the phosphoserine modification. The span at 16–28 shows a compositional bias: acidic residues; that stretch reads SEEEERERDEEQE. Over residues 49–59 the composition is skewed to low complexity; it reads RAPAGESLLGP. The segment covering 75-87 has biased composition (gly residues); that stretch reads AEAGGGISGGAEP. A Glycyl lysine isopeptide (Lys-Gly) (interchain with G-Cter in SUMO1); alternate cross-link involves residue K151. K151 participates in a covalent cross-link: Glycyl lysine isopeptide (Lys-Gly) (interchain with G-Cter in SUMO2); alternate. S160 bears the Phosphoserine mark. Positions 163-174 are enriched in basic and acidic residues; the sequence is PLDKTCHAKDTN. Residues 185 to 195 show a composition bias toward acidic residues; that stretch reads GEDEMDMESEK. S193 is modified (phosphoserine). The span at 237 to 258 shows a compositional bias: basic and acidic residues; sequence ARELGDFTPHDSEPGKGRLVRE. The segment covering 259–270 has biased composition (acidic residues); sequence DENDASDDEDDD. S264, S297, S559, and S560 each carry phosphoserine. Residues 380–560 are necessary and sufficient for interaction with PAX7; sequence TPSNEMAPVT…MADHLEGLSS (181 aa). The disordered stretch occupies residues 533 to 566; the sequence is EREARRTRRRQAREQTGQMADHLEGLSSDDEETS. T565 carries the phosphothreonine modification.

The protein belongs to the GCF family. As to quaternary structure, interacts with PAX3 and PAX7. Interacts with WDR5; associates with a histone methyltransferase (HMT) complex composed at least of RBBP5, ASH2L, SET1, SET2 and KMT2A/MLL1, KMT2D/MLL2, KMT2C/MLL3 and KMT2B/MLL4 through direct interaction with WDR5. In terms of tissue distribution, ubiquitously expressed in all tissues tested including skeletal muscle. Expressed in primary myoblasts.

Its subcellular location is the nucleus. Adapter protein linking the transcription factors PAX3 and PAX7 to the histone methylation machinery and involved in myogenesis. Associates with a histone methyltransferase complex that specifically mediates dimethylation and trimethylation of 'Lys-4' of histone H3. Mediates the recruitment of that complex to the transcription factors PAX3 and PAX7 on chromatin to regulate the expression of genes involved in muscle progenitor cells proliferation including ID3 and CDC20. The protein is PAX3- and PAX7-binding protein 1 (Paxbp1) of Mus musculus (Mouse).